Reading from the N-terminus, the 64-residue chain is Conotoxin Leo-T1 (64 aa).

The N-terminal stretch at 1–22 (MRCLPVFIILLLLIPSAPSVDA) is a signal peptide. The propeptide occupies 23-48 (QPKTEDDVPLASLHDNAKLTLQGLWD).

It belongs to the conotoxin T superfamily. Post-translationally, contains 2 disulfide bonds that can be either 'C1-C3, C2-C4' or 'C1-C4, C2-C3', since these disulfide connectivities have been observed for conotoxins with cysteine framework V (for examples, see AC P0DQQ7 and AC P81755). In terms of tissue distribution, expressed by the venom duct.

It is found in the secreted. This is Conotoxin Leo-T1 from Conus leopardus (Leopard cone).